Consider the following 844-residue polypeptide: Lysine-specific histone demethylase 1 homolog 1 (844 aa).

Basic and acidic residues predominate over residues 1-18; the sequence is MSTETKETRPETKPEDLG. A disordered region spans residues 1 to 131; the sequence is MSTETKETRP…PGPRARKRRR (131 aa). Residues 26–40 show a composition bias toward acidic residues; sequence PGEEPLGELIADDVN. Polar residues-rich tracts occupy residues 46–62 and 107–118; these read ASATETDFSLSPSQSEQ and DLVTEQQSQNPN. In terms of domain architecture, SWIRM spans 154–255; the sequence is GKEVDSEALI…FGLAPVIKEA (102 aa). The FAD site is built by Glu-295, Arg-297, and Arg-303. The Nuclear localization signal signature appears at 516 to 523; that stretch reads LKKGSIEF. FAD is bound at residue Glu-679.

It belongs to the flavin monoamine oxidase family. Interacts with CZS. Interacts with OTU6/OTLD1. Requires FAD as cofactor. Expressed in the shoot and root apical regions of young seedlings. Expressed in cotyledons and inflorescences.

The protein resides in the nucleus. The protein localises to the cytoplasm. Its function is as follows. Probable histone demethylase that reduces the levels of histone H3 'Lys-4' methylation in chromatin of the floral repressor FLOWERING LOCUS C (FLC) and the sporophytically silenced floral repressor FWA. Seems to act in partial redundancy with FLOWERING LOCUS D (FLD) to repress FLC expression. Required for cytosine methylation of FWA. Controls primary seed dormancy by regulating DOG1 and abscisic acid signaling-related genes. In association with OTU6/OTLD1, involved in transcriptional gene repression via histone deubiquitination and demethylation. The chain is Lysine-specific histone demethylase 1 homolog 1 from Arabidopsis thaliana (Mouse-ear cress).